The sequence spans 357 residues: Outer membrane porin protein OmpD (357 aa).

Residues 1–21 (MKLKLVAVAVTTLLAAGAVNA) form the signal peptide.

The protein belongs to the Gram-negative porin family. Homotrimer.

Its subcellular location is the cell outer membrane. Forms pores that allow passive diffusion of small molecules across the outer membrane. This chain is Outer membrane porin protein OmpD (ompD), found in Citrobacter koseri (strain ATCC BAA-895 / CDC 4225-83 / SGSC4696).